The sequence spans 74 residues: Apolipoprotein C-I, acidic form (74 aa).

Residues 1–26 form the signal peptide; it reads MRLFLSLPVLVVVLSMVLEGPTPAQG.

The protein belongs to the apolipoprotein C1 family.

The protein localises to the secreted. The polypeptide is Apolipoprotein C-I, acidic form (APOC1A) (Colobus guereza (Mantled guereza)).